Consider the following 554-residue polypeptide: Wee1-like protein kinase 2-C (554 aa).

Disordered stretches follow at residues 1 to 86 and 145 to 183; these read MRTA…GGEC and TLVN…SQMK. Composition is skewed to polar residues over residues 38–48 and 147–163; these read SPVSSWRTNNC and VNVN…THFQ. One can recognise a Protein kinase domain in the interval 213 to 487; it reads FLEIEKIGAG…AKNSVLRRCV (275 aa). Residues 219 to 227 and lysine 242 contribute to the ATP site; that span reads IGAGEFGSV. Catalysis depends on aspartate 340, which acts as the Proton acceptor. Positions 345 and 377 each coordinate Mg(2+). Residues 490–516 are a coiled coil; sequence AAELQKQLNVEKFKTAMLERELQAAKL.

It belongs to the protein kinase superfamily. Ser/Thr protein kinase family. WEE1 subfamily.

It is found in the nucleus. The catalysed reaction is L-tyrosyl-[protein] + ATP = O-phospho-L-tyrosyl-[protein] + ADP + H(+). Protein tyrosine kinase that phosphorylates and inhibits cdk1 and acts as a regulator of meiosis in oocytes. Required to ensure the meiotic cell cycle in oocytes by phosphorylating cdk1 at 'Tyr-15', leading to inhibit cdk1 activity and prevent meiosis. This chain is Wee1-like protein kinase 2-C (wee2-c), found in Xenopus laevis (African clawed frog).